Here is a 620-residue protein sequence, read N- to C-terminus: Probable serine/threonine-protein kinase RTK1 (620 aa).

Disordered stretches follow at residues 1-20, 29-130, 153-186, 210-237, and 252-271; these read MVKE…SLFR, AKIF…PVRT, KDAF…SNLS, QAST…KKKS, and HDNH…TKPK. Low complexity predominate over residues 7-18; it reads LHSSSSTSLSSL. Basic and acidic residues predominate over residues 56–76; it reads KNTDSDQEDQIKYNKPNDRRS. The residue at position 58 (Thr-58) is a Phosphothreonine. Ser-60 is subject to Phosphoserine. Composition is skewed to polar residues over residues 95 to 107, 165 to 186, and 210 to 222; these read VASS…SPTS, TAHS…SNLS, and QAST…LQHN. Ser-216 bears the Phosphoserine mark. Positions 254–263 are enriched in basic residues; that stretch reads NHHHHHHHNR. The 274-residue stretch at 302 to 575 folds into the Protein kinase domain; that stretch reads GIPGRKLGEG…MNDVVKDDWL (274 aa). ATP contacts are provided by residues 308–316 and Lys-330; that span reads LGEGASGSV. Lys-334 is covalently cross-linked (Glycyl lysine isopeptide (Lys-Gly) (interchain with G-Cter in ubiquitin)). Asp-430 serves as the catalytic Proton acceptor.

The protein belongs to the protein kinase superfamily. Ser/Thr protein kinase family. In terms of assembly, interacts with ribosome biogenesis factors ARC1, CKA2 and GUS1.

It carries out the reaction L-seryl-[protein] + ATP = O-phospho-L-seryl-[protein] + ADP + H(+). The enzyme catalyses L-threonyl-[protein] + ATP = O-phospho-L-threonyl-[protein] + ADP + H(+). Its function is as follows. Probable serine/threonine-protein kinase that may be involved in ribosome biogenesis. The chain is Probable serine/threonine-protein kinase RTK1 (RTK1) from Saccharomyces cerevisiae (strain ATCC 204508 / S288c) (Baker's yeast).